Consider the following 452-residue polypeptide: Friend leukemia integration 1 transcription factor (452 aa).

Ser-39 is subject to Phosphoserine. The region spanning 112-198 (PPPPNMTTNE…SHLSYLRESS (87 aa)) is the PNT domain. The tract at residues 209–271 (DQSSRLSVKE…PYQILGPTSS (63 aa)) is disordered. Residues 215–226 (SVKEDPSYDSVR) show a composition bias toward basic and acidic residues. Positions 248–257 (QTISKNTEQR) are enriched in polar residues. The segment at residues 281–361 (IQLWQFLLEL…HGKRYAYKFD (81 aa)) is a DNA-binding region (ETS). The interval 433–452 (NPNVPRHPNTHVPSHLGSYY) is disordered.

It belongs to the ETS family. Can form homodimers or heterodimers with ETV6/TEL1.

It localises to the nucleus. Sequence-specific transcriptional activator. Recognizes the DNA sequence 5'-C[CA]GGAAGT-3'. This chain is Friend leukemia integration 1 transcription factor (FLI1), found in Homo sapiens (Human).